Reading from the N-terminus, the 378-residue chain is tRNA-specific 2-thiouridylase MnmA (378 aa).

ATP is bound by residues 7–14 (GLSGGVDS) and M33. The interaction with target base in tRNA stretch occupies residues 102–104 (NPD). C107 serves as the catalytic Nucleophile. The cysteines at positions 107 and 209 are disulfide-linked. Residue G132 participates in ATP binding. The interval 159–161 (KDQ) is interaction with tRNA. The Cysteine persulfide intermediate role is filled by C209. The interaction with tRNA stretch occupies residues 316 to 317 (RY).

This sequence belongs to the MnmA/TRMU family.

The protein resides in the cytoplasm. It carries out the reaction S-sulfanyl-L-cysteinyl-[protein] + uridine(34) in tRNA + AH2 + ATP = 2-thiouridine(34) in tRNA + L-cysteinyl-[protein] + A + AMP + diphosphate + H(+). Functionally, catalyzes the 2-thiolation of uridine at the wobble position (U34) of tRNA, leading to the formation of s(2)U34. This is tRNA-specific 2-thiouridylase MnmA from Onion yellows phytoplasma (strain OY-M).